The primary structure comprises 397 residues: Tryptophan synthase beta chain (397 aa).

An N6-(pyridoxal phosphate)lysine modification is found at lysine 87.

Belongs to the TrpB family. As to quaternary structure, tetramer of two alpha and two beta chains. Pyridoxal 5'-phosphate serves as cofactor.

It catalyses the reaction (1S,2R)-1-C-(indol-3-yl)glycerol 3-phosphate + L-serine = D-glyceraldehyde 3-phosphate + L-tryptophan + H2O. Its pathway is amino-acid biosynthesis; L-tryptophan biosynthesis; L-tryptophan from chorismate: step 5/5. In terms of biological role, the beta subunit is responsible for the synthesis of L-tryptophan from indole and L-serine. The protein is Tryptophan synthase beta chain of Shigella boydii serotype 18 (strain CDC 3083-94 / BS512).